Here is a 375-residue protein sequence, read N- to C-terminus: Trichodiene synthase (375 aa).

This sequence belongs to the trichodiene synthase family.

It catalyses the reaction (2E,6E)-farnesyl diphosphate = trichodiene + diphosphate. The protein operates within sesquiterpene biosynthesis; trichothecene biosynthesis. In terms of biological role, TS is a member of the terpene cyclase group of enzymes. It catalyzes the isomerization and cyclization of farnesyl pyro-phosphate to form trichodiene, the first cyclic intermediate in the biosynthetic pathway for trichothecenes. It serves to branch trichothecene biosynthesis from the isoprenoid pathway. This is Trichodiene synthase (TRI5) from Fusarium cortaderiae.